We begin with the raw amino-acid sequence, 477 residues long: AAA-ATPase At3g28600 (477 aa).

The first 26 residues, 1–26 (MMMGNTFGSSLASLFFLWATIQQIFP), serve as a signal peptide directing secretion. 245-252 (GPPGTGKS) contacts ATP.

Belongs to the AAA ATPase family. BCS1 subfamily. It depends on Mg(2+) as a cofactor.

It catalyses the reaction ATP + H2O = ADP + phosphate + H(+). This chain is AAA-ATPase At3g28600, found in Arabidopsis thaliana (Mouse-ear cress).